Reading from the N-terminus, the 257-residue chain is 3-deoxy-manno-octulosonate cytidylyltransferase (257 aa).

Belongs to the KdsB family.

The protein resides in the cytoplasm. The enzyme catalyses 3-deoxy-alpha-D-manno-oct-2-ulosonate + CTP = CMP-3-deoxy-beta-D-manno-octulosonate + diphosphate. It participates in nucleotide-sugar biosynthesis; CMP-3-deoxy-D-manno-octulosonate biosynthesis; CMP-3-deoxy-D-manno-octulosonate from 3-deoxy-D-manno-octulosonate and CTP: step 1/1. Its pathway is bacterial outer membrane biogenesis; lipopolysaccharide biosynthesis. Its function is as follows. Activates KDO (a required 8-carbon sugar) for incorporation into bacterial lipopolysaccharide in Gram-negative bacteria. The sequence is that of 3-deoxy-manno-octulosonate cytidylyltransferase from Chromohalobacter salexigens (strain ATCC BAA-138 / DSM 3043 / CIP 106854 / NCIMB 13768 / 1H11).